The chain runs to 119 residues: Large ribosomal subunit protein bL19 (119 aa).

It belongs to the bacterial ribosomal protein bL19 family.

Its function is as follows. This protein is located at the 30S-50S ribosomal subunit interface and may play a role in the structure and function of the aminoacyl-tRNA binding site. This is Large ribosomal subunit protein bL19 from Leuconostoc mesenteroides subsp. mesenteroides (strain ATCC 8293 / DSM 20343 / BCRC 11652 / CCM 1803 / JCM 6124 / NCDO 523 / NBRC 100496 / NCIMB 8023 / NCTC 12954 / NRRL B-1118 / 37Y).